Here is a 259-residue protein sequence, read N- to C-terminus: Ribonuclease PH (259 aa).

Phosphate-binding positions include arginine 88 and 126–128 (GTR).

It belongs to the RNase PH family. As to quaternary structure, homohexameric ring arranged as a trimer of dimers.

It carries out the reaction tRNA(n+1) + phosphate = tRNA(n) + a ribonucleoside 5'-diphosphate. Phosphorolytic 3'-5' exoribonuclease that plays an important role in tRNA 3'-end maturation. Removes nucleotide residues following the 3'-CCA terminus of tRNAs; can also add nucleotides to the ends of RNA molecules by using nucleoside diphosphates as substrates, but this may not be physiologically important. Probably plays a role in initiation of 16S rRNA degradation (leading to ribosome degradation) during starvation. The protein is Ribonuclease PH of Mycobacterium ulcerans (strain Agy99).